The following is a 309-amino-acid chain: Ornithine carbamoyltransferase (309 aa).

Carbamoyl phosphate-binding positions include 56–59 (STRT), glutamine 83, arginine 107, and 134–137 (HPCQ). L-ornithine contacts are provided by residues asparagine 165, aspartate 223, and 227–228 (SM). Carbamoyl phosphate-binding positions include 263 to 264 (CL) and arginine 291.

It belongs to the aspartate/ornithine carbamoyltransferase superfamily. OTCase family.

It is found in the cytoplasm. It catalyses the reaction carbamoyl phosphate + L-ornithine = L-citrulline + phosphate + H(+). The protein operates within amino-acid biosynthesis; L-arginine biosynthesis; L-arginine from L-ornithine and carbamoyl phosphate: step 1/3. Reversibly catalyzes the transfer of the carbamoyl group from carbamoyl phosphate (CP) to the N(epsilon) atom of ornithine (ORN) to produce L-citrulline. This is Ornithine carbamoyltransferase from Burkholderia lata (strain ATCC 17760 / DSM 23089 / LMG 22485 / NCIMB 9086 / R18194 / 383).